A 482-amino-acid chain; its full sequence is MSTKKKEAVIGKESLAHKGLLRTITLVSTFGGLLFGYDTGVINGALPFMATAGQLNLTPVTEGLVASSLLLGAAFGAMFGGRLSDRHGRRKTILYLALLFIAATLGCTFSPNASVMIAFRFLLGLAVGCASVTVPTFLAEISPAERRGRIVTQNELMIVIGQLLAYTFNAIIGSTMGESANVWRYMLVIATLPAVVLWFGMLIVPESPRWLAAKGRMGDALRVLRQIREDSQAQQEIKEIKHAIEGTAKKAGFHDFQEPWIRRILFIGIGIAIVQQITGVNSIMYYGTEILREAGFQTEAALIGNIANGVISVIAVIFGIWLLGKVRRRPMLIIGQIGTMTALLLIGILSIVLEGTPALPYVVLSLTILFLAFQQTAISTVTWLMLSEIFPMHVRGLGMGISTFCLWTANFLIGFTFPILLNHIGMSATFFIFVAMNILAILFVKKYVPETKGRSLEQLEHSFRQYGRRADQEIQNQTTHLS.

Residues 1 to 29 (MSTKKKEAVIGKESLAHKGLLRTITLVST) lie on the Cytoplasmic side of the membrane. A helical membrane pass occupies residues 30 to 50 (FGGLLFGYDTGVINGALPFMA). Residues 51 to 59 (TAGQLNLTP) are Extracellular-facing. A helical membrane pass occupies residues 60–80 (VTEGLVASSLLLGAAFGAMFG). The Cytoplasmic portion of the chain corresponds to 81–92 (GRLSDRHGRRKT). Residues 93-113 (ILYLALLFIAATLGCTFSPNA) traverse the membrane as a helical segment. Over 114–120 (SVMIAFR) the chain is Extracellular. Residues 121 to 141 (FLLGLAVGCASVTVPTFLAEI) form a helical membrane-spanning segment. The Cytoplasmic portion of the chain corresponds to 142-155 (SPAERRGRIVTQNE). The chain crosses the membrane as a helical span at residues 156 to 176 (LMIVIGQLLAYTFNAIIGSTM). The Extracellular portion of the chain corresponds to 177 to 184 (GESANVWR). Residues 185 to 205 (YMLVIATLPAVVLWFGMLIVP) traverse the membrane as a helical segment. Topologically, residues 206–263 (ESPRWLAAKGRMGDALRVLRQIREDSQAQQEIKEIKHAIEGTAKKAGFHDFQEPWIRR) are cytoplasmic. Residues 264 to 284 (ILFIGIGIAIVQQITGVNSIM) form a helical membrane-spanning segment. Topologically, residues 285 to 301 (YYGTEILREAGFQTEAA) are extracellular. The chain crosses the membrane as a helical span at residues 302-322 (LIGNIANGVISVIAVIFGIWL). At 323–331 (LGKVRRRPM) the chain is on the cytoplasmic side. Helical transmembrane passes span 332 to 352 (LIIG…LSIV) and 353 to 373 (LEGT…FLAF). Residues 374–400 (QQTAISTVTWLMLSEIFPMHVRGLGMG) lie on the Cytoplasmic side of the membrane. Residues 401 to 421 (ISTFCLWTANFLIGFTFPILL) form a helical membrane-spanning segment. The Extracellular portion of the chain corresponds to 422–423 (NH). The chain crosses the membrane as a helical span at residues 424-444 (IGMSATFFIFVAMNILAILFV). The Cytoplasmic portion of the chain corresponds to 445–482 (KKYVPETKGRSLEQLEHSFRQYGRRADQEIQNQTTHLS).

The protein belongs to the major facilitator superfamily. Sugar transporter (TC 2.A.1.1) family.

Its subcellular location is the cell membrane. The chain is Putative metabolite transport protein YfiG (yfiG) from Bacillus subtilis (strain 168).